Reading from the N-terminus, the 586-residue chain is Pectinesterase 1 (586 aa).

Positions 1-49 are cleaved as a signal peptide; that stretch reads MDSVNSFKGYGKVDEAQDLALKKKTRKRLLLLSISVVVLIAVIIAAVVA. N-linked (GlcNAc...) asparagine glycosylation is found at Asn-57, Asn-97, Asn-154, Asn-201, and Asn-207. The short motif at 250 to 253 is the RRLM cleavage motif element; it reads RRLM. Residues 269–272 carry the RRLL cleavage motif motif; sequence RRLL. Residues Thr-355 and Gln-385 each coordinate substrate. Asp-408 (proton donor) is an active-site residue. A disulfide bridge connects residues Cys-422 and Cys-442. The active-site Nucleophile is the Asp-429. Asn-466 carries N-linked (GlcNAc...) asparagine glycosylation. Substrate is bound by residues Arg-492 and Trp-494.

It in the N-terminal section; belongs to the PMEI family. The protein in the C-terminal section; belongs to the pectinesterase family. As to quaternary structure, interacts with SBT6.1. Expressed in siliques.

Its subcellular location is the secreted. It is found in the cell wall. The protein resides in the golgi apparatus membrane. The enzyme catalyses [(1-&gt;4)-alpha-D-galacturonosyl methyl ester](n) + n H2O = [(1-&gt;4)-alpha-D-galacturonosyl](n) + n methanol + n H(+). Its pathway is glycan metabolism; pectin degradation; 2-dehydro-3-deoxy-D-gluconate from pectin: step 1/5. Its function is as follows. Acts in the modification of cell walls via demethylesterification of cell wall pectin. Demethylates protein phosphatase 2A (PP2A) that have been reversibly carboxymethylated by LCMT1. Acts as a negative regulators of genes involved in salt stress response. The protein is Pectinesterase 1 (PME1) of Arabidopsis thaliana (Mouse-ear cress).